The following is a 290-amino-acid chain: 7-methylguanosine phosphate-specific 5'-nucleotidase A (290 aa).

Catalysis depends on aspartate 39, which acts as the Nucleophile. Residues aspartate 39 and aspartate 41 each contribute to the Mg(2+) site. Catalysis depends on aspartate 41, which acts as the Proton donor. Glutamate 86 serves as a coordination point for CMP. A N(7)-methyl-GMP-binding site is contributed by glutamate 86. Substrate-binding positions include 154 to 155 (SA) and lysine 203. Mg(2+) is bound at residue aspartate 228.

It belongs to the pyrimidine 5'-nucleotidase family. Monomer.

It localises to the cytoplasm. It catalyses the reaction N(7)-methyl-GMP + H2O = N(7)-methylguanosine + phosphate. The catalysed reaction is CMP + H2O = cytidine + phosphate. The enzyme catalyses a ribonucleoside 5'-phosphate + H2O = a ribonucleoside + phosphate. Its function is as follows. Specifically hydrolyzes 7-methylguanosine monophosphate (m(7)GMP) to 7-methylguanosine and inorganic phosphate. The specific activity for m(7)GMP may protect cells against undesired salvage of m(7)GMP and its incorporation into nucleic acids. Also has weak activity for CMP. UMP and purine nucleotides are poor substrates. In Xenopus laevis (African clawed frog), this protein is 7-methylguanosine phosphate-specific 5'-nucleotidase A (Nt5c3b-a).